The chain runs to 102 residues: Small ribosomal subunit protein uS10 (102 aa).

It belongs to the universal ribosomal protein uS10 family. As to quaternary structure, part of the 30S ribosomal subunit.

In terms of biological role, involved in the binding of tRNA to the ribosomes. The chain is Small ribosomal subunit protein uS10 from Tropheryma whipplei (strain TW08/27) (Whipple's bacillus).